The primary structure comprises 932 residues: RNA-binding protein 12 (932 aa).

The disordered stretch occupies residues 97-116; it reads IPPANASRSGPPPSSGMSGR. Over residues 98–116 the composition is skewed to low complexity; the sequence is PPANASRSGPPPSSGMSGR. An RRM 1 domain is found at 304 to 379; it reads LYVSVHGMPF…RYVEVSPATE (76 aa). 2 positions are modified to phosphoserine: serine 352 and serine 375. Composition is skewed to polar residues over residues 392–401 and 408–417; these read KQNMGPSGQT and LPRSKSPSGQ. The interval 392-424 is disordered; the sequence is KQNMGPSGQTHPPPQTLPRSKSPSGQKRSRSRS. Phosphoserine occurs at positions 420, 422, and 424. Residues 430-507 form the RRM 2 domain; sequence FCVYLKGLPF…RFIQVHPITK (78 aa). Position 525 is a phosphoserine (serine 525). A compositionally biased stretch (low complexity) spans 717-734; the sequence is NGPPFNFPGNFGGSNAFG. Positions 717-855 are disordered; the sequence is NGPPFNFPGN…PGFASSSGKP (139 aa). The segment covering 783 to 811 has biased composition (gly residues); that stretch reads SGFGGGPQNFGNGPGSLGGPPGFGSGPPG. Positions 824–838 are enriched in pro residues; the sequence is AFGPGPGPGPGPGPG. In terms of domain architecture, RRM 3 spans 856–932; that stretch reads GPTVIKVQNM…PIGSRKVNLY (77 aa).

Its subcellular location is the nucleus. In Pongo abelii (Sumatran orangutan), this protein is RNA-binding protein 12 (RBM12).